The sequence spans 680 residues: ATPase family AAA domain-containing protein FIGL1 (680 aa).

3 disordered regions span residues 214 to 234 (YGNS…NQDR), 250 to 275 (FGTK…GAPN), and 288 to 352 (VRQK…GGKT). Over residues 295 to 308 (TESPSSCLSPQSDK) the composition is skewed to polar residues. Positions 313-323 (RGYGSRSGGLR) are enriched in gly residues. The segment covering 336–346 (TNGNNVGNLTS) has biased composition (polar residues). ATP contacts are provided by residues A406 and 446 to 451 (GTGKTM).

It belongs to the AAA ATPase family. Mg(2+) serves as cofactor.

Its subcellular location is the nucleus. The enzyme catalyses ATP + H2O = ADP + phosphate + H(+). In terms of biological role, involved in DNA double-strand break (DBS) repair via homologous recombination (HR). Limits class II meiotic crossover (CO) formation by regulating the invasion step of meiotic HR. May counteract DMC1 and RAD51-mediated inter-homolog strand invasion to limit CO formation. Functions independently of FANCM. This chain is ATPase family AAA domain-containing protein FIGL1, found in Arabidopsis thaliana (Mouse-ear cress).